The sequence spans 382 residues: UDP-N-acetylglucosamine--N-acetylmuramyl-(pentapeptide) pyrophosphoryl-undecaprenol N-acetylglucosamine transferase (382 aa).

Residues 11–13 (TGG), asparagine 124, arginine 164, serine 192, and glutamine 314 contribute to the UDP-N-acetyl-alpha-D-glucosamine site.

The protein belongs to the glycosyltransferase 28 family. MurG subfamily.

Its subcellular location is the cell membrane. The enzyme catalyses di-trans,octa-cis-undecaprenyl diphospho-N-acetyl-alpha-D-muramoyl-L-alanyl-D-glutamyl-meso-2,6-diaminopimeloyl-D-alanyl-D-alanine + UDP-N-acetyl-alpha-D-glucosamine = di-trans,octa-cis-undecaprenyl diphospho-[N-acetyl-alpha-D-glucosaminyl-(1-&gt;4)]-N-acetyl-alpha-D-muramoyl-L-alanyl-D-glutamyl-meso-2,6-diaminopimeloyl-D-alanyl-D-alanine + UDP + H(+). It participates in cell wall biogenesis; peptidoglycan biosynthesis. Its function is as follows. Cell wall formation. Catalyzes the transfer of a GlcNAc subunit on undecaprenyl-pyrophosphoryl-MurNAc-pentapeptide (lipid intermediate I) to form undecaprenyl-pyrophosphoryl-MurNAc-(pentapeptide)GlcNAc (lipid intermediate II). In Deinococcus deserti (strain DSM 17065 / CIP 109153 / LMG 22923 / VCD115), this protein is UDP-N-acetylglucosamine--N-acetylmuramyl-(pentapeptide) pyrophosphoryl-undecaprenol N-acetylglucosamine transferase.